We begin with the raw amino-acid sequence, 411 residues long: Imidazolonepropionase (411 aa).

Fe(3+) contacts are provided by His-75 and His-77. Zn(2+) is bound by residues His-75 and His-77. Arg-84, Tyr-147, and His-180 together coordinate 4-imidazolone-5-propanoate. Residue Tyr-147 participates in N-formimidoyl-L-glutamate binding. His-245 is a binding site for Fe(3+). Zn(2+) is bound at residue His-245. Residue Gln-248 participates in 4-imidazolone-5-propanoate binding. Residue Asp-320 coordinates Fe(3+). Asp-320 contacts Zn(2+). The N-formimidoyl-L-glutamate site is built by Asn-322 and Gly-324. Thr-325 contributes to the 4-imidazolone-5-propanoate binding site.

This sequence belongs to the metallo-dependent hydrolases superfamily. HutI family. Zn(2+) serves as cofactor. Fe(3+) is required as a cofactor.

It localises to the cytoplasm. The enzyme catalyses 4-imidazolone-5-propanoate + H2O = N-formimidoyl-L-glutamate. The protein operates within amino-acid degradation; L-histidine degradation into L-glutamate; N-formimidoyl-L-glutamate from L-histidine: step 3/3. Its function is as follows. Catalyzes the hydrolytic cleavage of the carbon-nitrogen bond in imidazolone-5-propanoate to yield N-formimidoyl-L-glutamate. It is the third step in the universal histidine degradation pathway. This chain is Imidazolonepropionase, found in Aeromonas salmonicida (strain A449).